A 352-amino-acid chain; its full sequence is Glycerol-3-phosphate dehydrogenase [NAD(P)+] (352 aa).

4 residues coordinate NADPH: serine 11, tryptophan 12, arginine 32, and lysine 105. Sn-glycerol 3-phosphate contacts are provided by lysine 105, glycine 133, and serine 135. Alanine 137 lines the NADPH pocket. The sn-glycerol 3-phosphate site is built by lysine 188, aspartate 241, serine 251, arginine 252, and asparagine 253. Residue lysine 188 is the Proton acceptor of the active site. Position 252 (arginine 252) interacts with NADPH. NADPH is bound by residues valine 276 and glutamate 278.

It belongs to the NAD-dependent glycerol-3-phosphate dehydrogenase family.

It is found in the cytoplasm. It carries out the reaction sn-glycerol 3-phosphate + NAD(+) = dihydroxyacetone phosphate + NADH + H(+). The catalysed reaction is sn-glycerol 3-phosphate + NADP(+) = dihydroxyacetone phosphate + NADPH + H(+). It functions in the pathway membrane lipid metabolism; glycerophospholipid metabolism. Its function is as follows. Catalyzes the reduction of the glycolytic intermediate dihydroxyacetone phosphate (DHAP) to sn-glycerol 3-phosphate (G3P), the key precursor for phospholipid synthesis. The protein is Glycerol-3-phosphate dehydrogenase [NAD(P)+] of Desulfitobacterium hafniense (strain Y51).